The primary structure comprises 342 residues: Muscleblind-like protein 3 (342 aa).

4 C3H1-type zinc fingers span residues 14–42, 48–74, 174–202, and 210–236; these read WLTL…HPPR, NGRV…HPPP, TDRL…HPTD, and DNSV…HPPP. Positions 316–326 are enriched in low complexity; it reads PSTVSTATPPA. A disordered region spans residues 316–342; sequence PSTVSTATPPASNVPYVPTTTGNQLKY. Positions 333-342 are enriched in polar residues; that stretch reads PTTTGNQLKY.

Belongs to the muscleblind family.

The protein resides in the nucleus. It is found in the cytoplasm. Mediates pre-mRNA alternative splicing regulation. Acts either as activator or repressor of splicing on specific pre-mRNA targets. Inhibits cardiac troponin-T (TNNT2) pre-mRNA exon inclusion but induces insulin receptor (IR) pre-mRNA exon inclusion in muscle. Antagonizes the alternative splicing activity pattern of CELF proteins. Could inhibit terminal muscle differentiation, acting at approximately the time of myogenin induction. The chain is Muscleblind-like protein 3 (Mbnl3) from Mus musculus (Mouse).